The primary structure comprises 148 residues: Macrodomain Ter protein (148 aa).

Belongs to the MatP family. Homodimer.

It is found in the cytoplasm. In terms of biological role, required for spatial organization of the terminus region of the chromosome (Ter macrodomain) during the cell cycle. Prevents early segregation of duplicated Ter macrodomains during cell division. Binds specifically to matS, which is a 13 bp signature motif repeated within the Ter macrodomain. This Haemophilus influenzae (strain ATCC 51907 / DSM 11121 / KW20 / Rd) protein is Macrodomain Ter protein.